A 208-amino-acid chain; its full sequence is Recombination protein RecR (208 aa).

A C4-type zinc finger spans residues 57 to 72 (CALCNTLTEQEVCVTC). One can recognise a Toprim domain in the interval 80 to 187 (SKLCVVETPA…QVTRLARGVP (108 aa)).

The protein belongs to the RecR family.

Functionally, may play a role in DNA repair. It seems to be involved in an RecBC-independent recombinational process of DNA repair. It may act with RecF and RecO. This is Recombination protein RecR from Polaromonas naphthalenivorans (strain CJ2).